The following is a 160-amino-acid chain: Lipoprotein signal peptidase (160 aa).

The next 3 helical transmembrane spans lie at 5-25 (LVFF…KFII), 60-80 (IEWL…AFFI), and 84-104 (LPFL…AGTV). Catalysis depends on residues aspartate 118 and aspartate 132. A helical membrane pass occupies residues 128–148 (FNIADSCLTVGVIGLLLLYIV).

The protein belongs to the peptidase A8 family.

The protein localises to the cell membrane. The catalysed reaction is Release of signal peptides from bacterial membrane prolipoproteins. Hydrolyzes -Xaa-Yaa-Zaa-|-(S,diacylglyceryl)Cys-, in which Xaa is hydrophobic (preferably Leu), and Yaa (Ala or Ser) and Zaa (Gly or Ala) have small, neutral side chains.. It functions in the pathway protein modification; lipoprotein biosynthesis (signal peptide cleavage). Functionally, this protein specifically catalyzes the removal of signal peptides from prolipoproteins. The sequence is that of Lipoprotein signal peptidase from Dehalococcoides mccartyi (strain ATCC BAA-2100 / JCM 16839 / KCTC 5957 / BAV1).